The chain runs to 572 residues: Zyxin (572 aa).

An N-acetylalanine modification is found at Ala-2. Residues 23-351 are disordered; the sequence is QKKFGPVVAP…VRSPGAPGPL (329 aa). 2 stretches are compositionally biased toward pro residues: residues 63-78 and 93-108; these read IPPP…PPPL and FPPP…PPAP. 5 positions are modified to phosphoserine: Ser-116, Ser-142, Ser-143, Ser-169, and Ser-170. Residues 143-156 show a composition bias toward low complexity; that stretch reads SIDLEIDSLSSLLD. Thr-179 is subject to Phosphothreonine. A compositionally biased stretch (low complexity) spans 202–239; the sequence is SPSSSQPLPQVPAPAQSQTQFHVQPQPQPKPQVQLHVQ. Residues 240–252 show a composition bias toward polar residues; the sequence is SQTQPVSLANTQP. Residue Arg-253 is modified to Asymmetric dimethylarginine. Residues 253–265 are compositionally biased toward pro residues; it reads RGPPASSPAPAPK. Ser-259 bears the Phosphoserine mark. Residue Lys-265 is modified to N6-acetyllysine. Ser-267 carries the post-translational modification Phosphoserine. Thr-270 carries the post-translational modification Phosphothreonine. An N6-acetyllysine modification is found at Lys-272. Thr-274 carries the post-translational modification Phosphothreonine. Lys-279 is modified (N6-acetyllysine). Residues Ser-281, Ser-288, and Ser-308 each carry the phosphoserine modification. The span at 305 to 318 shows a compositional bias: polar residues; the sequence is GTGSPQPPSFTYAQ. Over residues 319-330 the composition is skewed to basic and acidic residues; that stretch reads QREKPRVQEKQH. Ser-344 carries the post-translational modification Phosphoserine. LIM zinc-binding domains lie at 384 to 443, 444 to 503, and 504 to 570; these read CGRC…TLEK, CNTC…YAPR, and CSVC…TARA.

This sequence belongs to the zyxin/ajuba family. In terms of assembly, interacts with HPV type 6 protein E6. Does not interact significantly with E6 proteins from HPV types 11, 16, or 18. Interacts, via the Pro-rich regions, with the EVH1 domains of ENAH, EVL and VASP. Interacts with the first LIM domain of TES. Interacts with NEBL (isoform 2). Interacts with SYNPO2. (Microbial infection) Interacts with human papillomavirus type 6/HPV6 protein E6. Does not interact significantly with E6 proteins from HPV types 11, 16, or 18.

The protein resides in the cytoplasm. It is found in the cytoskeleton. Its subcellular location is the nucleus. The protein localises to the cell junction. It localises to the focal adhesion. Its function is as follows. Adhesion plaque protein. Binds alpha-actinin and the CRP protein. Important for targeting TES and ENA/VASP family members to focal adhesions and for the formation of actin-rich structures. May be a component of a signal transduction pathway that mediates adhesion-stimulated changes in gene expression. This chain is Zyxin (ZYX), found in Homo sapiens (Human).